A 160-amino-acid chain; its full sequence is Cytochrome b6-f complex subunit 4 (160 aa).

A run of 4 helical transmembrane segments spans residues 36-56, 68-88, 95-115, and 131-151; these read LLYI…GLAV, PFAT…FQIL, FFGV…PFLE, and SVFL…VLPI.

The protein belongs to the cytochrome b family. PetD subfamily. The 4 large subunits of the cytochrome b6-f complex are cytochrome b6, subunit IV (17 kDa polypeptide, petD), cytochrome f and the Rieske protein, while the 4 small subunits are petG, petL, petM and petN. The complex functions as a dimer.

The protein localises to the plastid. It localises to the chloroplast thylakoid membrane. Component of the cytochrome b6-f complex, which mediates electron transfer between photosystem II (PSII) and photosystem I (PSI), cyclic electron flow around PSI, and state transitions. The chain is Cytochrome b6-f complex subunit 4 from Welwitschia mirabilis (Tree tumbo).